A 457-amino-acid chain; its full sequence is tRNA-2-methylthio-N(6)-dimethylallyladenosine synthase (457 aa).

The MTTase N-terminal domain maps to 4-119 (RNFHIITFGC…APDAIERLYA (116 aa)). 6 residues coordinate [4Fe-4S] cluster: Cys13, Cys48, Cys82, Cys164, Cys168, and Cys171. Positions 150 to 385 (NTLALMAYVN…QATQLEHSTS (236 aa)) constitute a Radical SAM core domain. In terms of domain architecture, TRAM spans 388–456 (KSRVGVETTV…KHSLVAEPLI (69 aa)).

This sequence belongs to the methylthiotransferase family. MiaB subfamily. In terms of assembly, monomer. [4Fe-4S] cluster is required as a cofactor.

It localises to the cytoplasm. It carries out the reaction N(6)-dimethylallyladenosine(37) in tRNA + (sulfur carrier)-SH + AH2 + 2 S-adenosyl-L-methionine = 2-methylsulfanyl-N(6)-dimethylallyladenosine(37) in tRNA + (sulfur carrier)-H + 5'-deoxyadenosine + L-methionine + A + S-adenosyl-L-homocysteine + 2 H(+). Functionally, catalyzes the methylthiolation of N6-(dimethylallyl)adenosine (i(6)A), leading to the formation of 2-methylthio-N6-(dimethylallyl)adenosine (ms(2)i(6)A) at position 37 in tRNAs that read codons beginning with uridine. The chain is tRNA-2-methylthio-N(6)-dimethylallyladenosine synthase from Lawsonia intracellularis (strain PHE/MN1-00).